Consider the following 175-residue polypeptide: NADH-quinone oxidoreductase subunit I (175 aa).

4Fe-4S ferredoxin-type domains lie at 69–98 and 115–144; these read KRDE…IEAA and KKFE…LDGT. [4Fe-4S] cluster is bound by residues C78, C81, C84, C88, C124, C127, C130, and C134.

This sequence belongs to the complex I 23 kDa subunit family. In terms of assembly, NDH-1 is composed of 14 different subunits. Subunits NuoA, H, J, K, L, M, N constitute the membrane sector of the complex. Requires [4Fe-4S] cluster as cofactor.

It is found in the cell inner membrane. It catalyses the reaction a quinone + NADH + 5 H(+)(in) = a quinol + NAD(+) + 4 H(+)(out). NDH-1 shuttles electrons from NADH, via FMN and iron-sulfur (Fe-S) centers, to quinones in the respiratory chain. The immediate electron acceptor for the enzyme in this species is believed to be ubiquinone. Couples the redox reaction to proton translocation (for every two electrons transferred, four hydrogen ions are translocated across the cytoplasmic membrane), and thus conserves the redox energy in a proton gradient. This is NADH-quinone oxidoreductase subunit I from Leptospira biflexa serovar Patoc (strain Patoc 1 / Ames).